A 624-amino-acid chain; its full sequence is Altered inheritance of mitochondria protein 9, mitochondrial (624 aa).

The transit peptide at M1–Q34 directs the protein to the mitochondrion.

The protein belongs to the AIM9 family.

The protein resides in the mitochondrion. The protein is Altered inheritance of mitochondria protein 9, mitochondrial (AIM9) of Candida albicans (strain WO-1) (Yeast).